The chain runs to 203 residues: Holliday junction branch migration complex subunit RuvA (203 aa).

The tract at residues 1–64 is domain I; the sequence is MIGRLRGTLA…EDAQLLYGFI (64 aa). Residues 65-143 form a domain II region; sequence GKRDRDFFRE…AWEVVPSMFA (79 aa). A flexible linker region spans residues 144–154; the sequence is LVPNQPDMPAG. Residues 155 to 203 form a domain III region; sequence QVASAESDAVSALISLGYKPQEASKAVSAIKDKNLSSEDMIRRALKGMI.

It belongs to the RuvA family. Homotetramer. Forms an RuvA(8)-RuvB(12)-Holliday junction (HJ) complex. HJ DNA is sandwiched between 2 RuvA tetramers; dsDNA enters through RuvA and exits via RuvB. An RuvB hexamer assembles on each DNA strand where it exits the tetramer. Each RuvB hexamer is contacted by two RuvA subunits (via domain III) on 2 adjacent RuvB subunits; this complex drives branch migration. In the full resolvosome a probable DNA-RuvA(4)-RuvB(12)-RuvC(2) complex forms which resolves the HJ.

It localises to the cytoplasm. Functionally, the RuvA-RuvB-RuvC complex processes Holliday junction (HJ) DNA during genetic recombination and DNA repair, while the RuvA-RuvB complex plays an important role in the rescue of blocked DNA replication forks via replication fork reversal (RFR). RuvA specifically binds to HJ cruciform DNA, conferring on it an open structure. The RuvB hexamer acts as an ATP-dependent pump, pulling dsDNA into and through the RuvAB complex. HJ branch migration allows RuvC to scan DNA until it finds its consensus sequence, where it cleaves and resolves the cruciform DNA. The polypeptide is Holliday junction branch migration complex subunit RuvA (Pseudomonas fluorescens (strain SBW25)).